The following is a 301-amino-acid chain: Homoserine O-acetyltransferase (301 aa).

The active-site Acyl-thioester intermediate is the cysteine 142. 2 residues coordinate substrate: lysine 163 and serine 192. Histidine 235 (proton acceptor) is an active-site residue. Glutamate 237 is an active-site residue. Position 249 (arginine 249) interacts with substrate.

This sequence belongs to the MetA family.

It localises to the cytoplasm. The enzyme catalyses L-homoserine + acetyl-CoA = O-acetyl-L-homoserine + CoA. The protein operates within amino-acid biosynthesis; L-methionine biosynthesis via de novo pathway; O-acetyl-L-homoserine from L-homoserine: step 1/1. Its function is as follows. Transfers an acetyl group from acetyl-CoA to L-homoserine, forming acetyl-L-homoserine. The protein is Homoserine O-acetyltransferase of Lachnoclostridium phytofermentans (strain ATCC 700394 / DSM 18823 / ISDg) (Clostridium phytofermentans).